We begin with the raw amino-acid sequence, 482 residues long: MALQIYNTLTRRKEPFVPLEAGTVKMYVCGVTVYDYCHLGHGRTYVVWDTVRRYLISRGYAVTYVQNFTDVDDKILRRAQQEGTTMEAVAEKYIAAYFEDMDRLNVLRADSYPRATQTMPEIGALIDRLTSIGYAYPAAGDVYYSVRRFAEYGKLSGKRLAELEAGASERLQDEELARKKDPFDFALWKGAKPGEPAWDSPWGAGRPGWHIECSAMVRKSLGETIDIHAGGEDLQFPHHENEIAQSEAVTGKPLARYWMHNAFLNVVNSSGAEEKMSKSLGNFKTLRDLFEVFPPMALRLFLLKTSYRNPIAFSAEAFKGSEQNWRELEEVLQLAGWIAGQGRPATDDIESEPWVRRFNEAMDDDFNTAAALAEVIALGKQLAGRYHAAIHGTPLADPARFAREWRTFALLCDILGLKAAEPEARQSALPEAEIEAQIALRRQAREERNWAEADRIRKQLLDQGIVLIDHKEKPTTWRHADP.

Cys29 contacts Zn(2+). The short motif at 31-41 is the 'HIGH' region element; that stretch reads VTVYDYCHLGH. Zn(2+) is bound by residues Cys213, His238, and Glu242. Positions 275–279 match the 'KMSKS' region motif; the sequence is KMSKS. Residue Lys278 coordinates ATP.

This sequence belongs to the class-I aminoacyl-tRNA synthetase family. In terms of assembly, monomer. Zn(2+) serves as cofactor.

Its subcellular location is the cytoplasm. The enzyme catalyses tRNA(Cys) + L-cysteine + ATP = L-cysteinyl-tRNA(Cys) + AMP + diphosphate. The sequence is that of Cysteine--tRNA ligase from Gloeobacter violaceus (strain ATCC 29082 / PCC 7421).